The primary structure comprises 119 residues: Large ribosomal subunit protein bL20 (119 aa).

It belongs to the bacterial ribosomal protein bL20 family.

In terms of biological role, binds directly to 23S ribosomal RNA and is necessary for the in vitro assembly process of the 50S ribosomal subunit. It is not involved in the protein synthesizing functions of that subunit. The polypeptide is Large ribosomal subunit protein bL20 (Clostridium beijerinckii (strain ATCC 51743 / NCIMB 8052) (Clostridium acetobutylicum)).